A 450-amino-acid polypeptide reads, in one-letter code: MKATKTTYKKDPMGLTPSQIVNELNRFIVGQEKAKKAVAIALRNRCRRKRVEGNLRNEIVPKNILMIGSTGVGKTEIARRLAKLTNSPFYKIEATKFTEVGYVGRDVESIIRDLVEIAVNTEKTLAKTKVDIHAREKAIERILDSLVGKTSSSETREKFKEKILNGELDDKEIEISVADTTPVGGGSFEIPGMPGASMGVLNLGDMIGRALGSSKTKTKKMLVKDAMAIIIPEESEKLIDQEKIIQQAINLAENDGIVFIDEIDKIASTGSSGAKNAEISREGVQRDLLPLIEGTTVNTKYGPVKTDHILFIASGAFHIAKPSDLLPELQGRLPIRVELNSLTKDDMIKILLEPETSLIKQYSALIGTEDVHLEFAASAIEKIADYAITVNLEVEDIGARRLHTILENLLEDISFEASEMKGKKITIDDKFVENQLSKIITNLDLAKFVL.

ATP-binding positions include valine 29, 71-76, aspartate 261, glutamate 328, and arginine 400; that span reads GVGKTE.

It belongs to the ClpX chaperone family. HslU subfamily. In terms of assembly, a double ring-shaped homohexamer of HslV is capped on each side by a ring-shaped HslU homohexamer. The assembly of the HslU/HslV complex is dependent on binding of ATP.

It localises to the cytoplasm. ATPase subunit of a proteasome-like degradation complex; this subunit has chaperone activity. The binding of ATP and its subsequent hydrolysis by HslU are essential for unfolding of protein substrates subsequently hydrolyzed by HslV. HslU recognizes the N-terminal part of its protein substrates and unfolds these before they are guided to HslV for hydrolysis. This chain is ATP-dependent protease ATPase subunit HslU, found in Rickettsia conorii (strain ATCC VR-613 / Malish 7).